A 546-amino-acid chain; its full sequence is Chaperonin GroEL (546 aa).

ATP is bound by residues 30–33 (TLGP), Lys51, 87–91 (DGTTT), Gly415, 479–481 (NAA), and Asp495. Residues 527-546 (EEKPDVSASSGGMGGMGGMM) are disordered. The span at 537–546 (GGMGGMGGMM) shows a compositional bias: gly residues.

The protein belongs to the chaperonin (HSP60) family. Forms a cylinder of 14 subunits composed of two heptameric rings stacked back-to-back. Interacts with the co-chaperonin GroES.

The protein localises to the cytoplasm. The catalysed reaction is ATP + H2O + a folded polypeptide = ADP + phosphate + an unfolded polypeptide.. In terms of biological role, together with its co-chaperonin GroES, plays an essential role in assisting protein folding. The GroEL-GroES system forms a nano-cage that allows encapsulation of the non-native substrate proteins and provides a physical environment optimized to promote and accelerate protein folding. The chain is Chaperonin GroEL from Baumannia cicadellinicola subsp. Homalodisca coagulata.